The sequence spans 230 residues: UPF0173 metal-dependent hydrolase Rsph17025_2229 (230 aa).

Belongs to the UPF0173 family.

The chain is UPF0173 metal-dependent hydrolase Rsph17025_2229 from Cereibacter sphaeroides (strain ATCC 17025 / ATH 2.4.3) (Rhodobacter sphaeroides).